The sequence spans 918 residues: Isoleucine--tRNA ligase (918 aa).

The 'HIGH' region motif lies at 57-67 (PYANGHIHIGH). An L-isoleucyl-5'-AMP-binding site is contributed by E564. The short motif at 605 to 609 (KMSKS) is the 'KMSKS' region element. K608 contributes to the ATP binding site. The Zn(2+) site is built by C888, C891, C903, and C906.

The protein belongs to the class-I aminoacyl-tRNA synthetase family. IleS type 1 subfamily. In terms of assembly, monomer. The cofactor is Zn(2+).

It localises to the cytoplasm. The enzyme catalyses tRNA(Ile) + L-isoleucine + ATP = L-isoleucyl-tRNA(Ile) + AMP + diphosphate. Catalyzes the attachment of isoleucine to tRNA(Ile). As IleRS can inadvertently accommodate and process structurally similar amino acids such as valine, to avoid such errors it has two additional distinct tRNA(Ile)-dependent editing activities. One activity is designated as 'pretransfer' editing and involves the hydrolysis of activated Val-AMP. The other activity is designated 'posttransfer' editing and involves deacylation of mischarged Val-tRNA(Ile). This chain is Isoleucine--tRNA ligase, found in Nitratiruptor sp. (strain SB155-2).